The sequence spans 374 residues: 4-hydroxy-3-methylbut-2-en-1-yl diphosphate synthase (flavodoxin) (374 aa).

Residues Cys-270, Cys-273, Cys-305, and Glu-312 each contribute to the [4Fe-4S] cluster site.

Belongs to the IspG family. It depends on [4Fe-4S] cluster as a cofactor.

The catalysed reaction is (2E)-4-hydroxy-3-methylbut-2-enyl diphosphate + oxidized [flavodoxin] + H2O + 2 H(+) = 2-C-methyl-D-erythritol 2,4-cyclic diphosphate + reduced [flavodoxin]. Its pathway is isoprenoid biosynthesis; isopentenyl diphosphate biosynthesis via DXP pathway; isopentenyl diphosphate from 1-deoxy-D-xylulose 5-phosphate: step 5/6. Converts 2C-methyl-D-erythritol 2,4-cyclodiphosphate (ME-2,4cPP) into 1-hydroxy-2-methyl-2-(E)-butenyl 4-diphosphate. The chain is 4-hydroxy-3-methylbut-2-en-1-yl diphosphate synthase (flavodoxin) from Cellvibrio japonicus (strain Ueda107) (Pseudomonas fluorescens subsp. cellulosa).